Reading from the N-terminus, the 269-residue chain is Aquaporin-1 (269 aa).

Topologically, residues 2–11 are cytoplasmic; sequence ASEFKKKLFW. Residues 12-29 form a helical membrane-spanning segment; it reads RAVVAEFLATTLFVFISI. Over 30–46 the chain is Extracellular; it reads GSALGFKYPVGNNQTAV. N42 is a glycosylation site (N-linked (GlcNAc...) asparagine). A helical membrane pass occupies residues 47 to 65; that stretch reads QDNVKVSLAFGLSIATLAQ. At 66–68 the chain is on the cytoplasmic side; that stretch reads SVG. An intramembrane segment occupies 69–82; sequence HISGAHLNPAVTLG. The NPA 1 motif lies at 76–78; that stretch reads NPA. Topologically, residues 83 to 90 are cytoplasmic; that stretch reads LLLSCQIS. Residues 91–109 form a helical membrane-spanning segment; it reads IFRALMYIIAQCVGAIVAT. Topologically, residues 110–133 are extracellular; that stretch reads AILSGITSSLTGNSLGRNDLADGV. The chain crosses the membrane as a helical span at residues 134 to 153; sequence NSGQGLGIEIIGTLQLVLCV. Residues 154 to 163 lie on the Cytoplasmic side of the membrane; the sequence is LATTDRRRRD. A helical transmembrane segment spans residues 164–181; sequence LGGSAPLAIGLSVALGHL. The Extracellular portion of the chain corresponds to 182–186; that stretch reads LAIDY. Residues 187 to 199 lie within the membrane without spanning it; the sequence is TGCGINPARSFGS. The short motif at 192-194 is the NPA 2 element; that stretch reads NPA. Residues 200–206 are Extracellular-facing; sequence AVITHNF. A glycan (N-linked (GlcNAc...) asparagine) is linked at N205. The helical transmembrane segment at 207 to 224 threads the bilayer; it reads SNHWIFWVGPFIGGALAV. Residues 225-269 lie on the Cytoplasmic side of the membrane; that stretch reads LIYDFILAPRSSDLTDRVKVWTSGQVEEYDLDADDINSRVEMKPK. S247 carries the post-translational modification Phosphoserine. A Phosphotyrosine modification is found at Y253. S262 carries the post-translational modification Phosphoserine.

Belongs to the MIP/aquaporin (TC 1.A.8) family. In terms of assembly, homotetramer; each monomer provides an independent water pore. Component of the ankyrin-1 complex in the erythrocyte, composed of ANK1, RHCE, RHAG, SLC4A1, EPB42, GYPA, GYPB and AQP1. Interacts with EPHB2; involved in endolymph production in the inner ear. Identified in a complex with STOM. Interacts (via the N-terminal) with ANK1 (via ANK 1-5 repeats). Interacts (via the C-terminal) with EPB42. In terms of tissue distribution, detected in erythrocytes (at protein level). Expressed in a number of tissues including erythrocytes, renal tubules, retinal pigment epithelium, heart, lung, skeletal muscle, kidney and pancreas. Weakly expressed in brain, placenta and liver.

It is found in the cell membrane. It carries out the reaction H2O(in) = H2O(out). It catalyses the reaction nitric oxide(out) = nitric oxide(in). The enzyme catalyses CO2(out) = CO2(in). The catalysed reaction is glycerol(in) = glycerol(out). It carries out the reaction H2O2(out) = H2O2(in). It catalyses the reaction K(+)(in) = K(+)(out). The enzyme catalyses Na(+)(in) = Na(+)(out). Its activity is regulated as follows. The water channel activity is inhibited by P-choloromercuribenzene sulphonate and diethylpyrocarbonate(DPPC). The glycerol channel activity is inhibited by P-choloromercuribenzene sulphonate, diethylpyrocarbonate(DPPC), phloretin and Cu(2+). Inhibited by mercury. In terms of biological role, forms a water channel that facilitates the transport of water across cell membranes, playing a crucial role in water homeostasis in various tissues. Could also be permeable to small solutes including hydrogen peroxide, glycerol and gases such as amonnia (NH3), nitric oxide (NO) and carbon dioxide (CO2). Recruited to the ankyrin-1 complex, a multiprotein complex of the erythrocyte membrane, it could be part of a CO2 metabolon, linking facilitated diffusion of CO2 across the membrane, anion exchange of Cl(-)/HCO3(-) and interconversion of dissolved CO2 and carbonic acid in the cytosol. In vitro, it shows non-selective gated cation channel activity and may be permeable to cations like K(+) and Na(+) in vivo. The protein is Aquaporin-1 of Homo sapiens (Human).